The sequence spans 311 residues: Fucose-specific lectin (311 aa).

6 repeat units span residues 1–53 (MSTP…KNVI), 54–103 (AKAK…AGAK), 104–151 (FTVA…EGTN), 152–209 (LGVA…FDKA), 210–256 (PPRC…DKRT), and 257–311 (ITPV…PPAE). The interval 1–311 (MSTPGAQEVL…LGRRALPPAE (311 aa)) is 6 X approximate tandem repeats. Arg-25, Glu-37, Trp-44, Arg-73, Glu-85, Trp-94, Arg-126, Glu-138, Trp-146, Arg-177, Gln-189, Trp-198, Arg-230, Gln-242, Arg-277, and Glu-291 together coordinate beta-L-fucose.

This sequence belongs to the fungal fucose-specific lectin family. Homodimer.

Lectin that specifically binds to L-fucose and weakly reacts with mannose and N-acetyl-neuraminic acid. Has strongest preference for the alpha-1,6-fucosylated chain (core fucose) on glycoproteins among alpha-1,2-, alpha-1,3-, alpha-1,4-, and alpha-1,6-fucosylated chains. Binds to fucose residues of IgE in mice and human, causing antigen-independent IgE-mediated mast cell activation and anaphylactoid reactions in mice and is possibly implicated in allergic response to Aspergillus oryzae in humans. Induces secretion of pro-inflammatory cytokines IL6 and IL8 implicated in ocular diseases such as mycotic keratitis, probably through its interaction with host toll-like receptors TLR2 and TLR4, followed by up-regulation of pro-inflammatory cytokines. In Aspergillus oryzae (strain ATCC 42149 / RIB 40) (Yellow koji mold), this protein is Fucose-specific lectin.